Consider the following 540-residue polypeptide: Chaperonin GroEL (540 aa).

ATP contacts are provided by residues 29-32 (TLGP), 86-90 (DGTTT), Gly413, 476-478 (NAA), and Asp492.

This sequence belongs to the chaperonin (HSP60) family. In terms of assembly, forms a cylinder of 14 subunits composed of two heptameric rings stacked back-to-back. Interacts with the co-chaperonin GroES.

The protein localises to the cytoplasm. It carries out the reaction ATP + H2O + a folded polypeptide = ADP + phosphate + an unfolded polypeptide.. Functionally, together with its co-chaperonin GroES, plays an essential role in assisting protein folding. The GroEL-GroES system forms a nano-cage that allows encapsulation of the non-native substrate proteins and provides a physical environment optimized to promote and accelerate protein folding. In Geobacillus thermodenitrificans (strain NG80-2), this protein is Chaperonin GroEL.